Consider the following 471-residue polypeptide: Paraneoplastic antigen-like protein 8A (471 aa).

2 disordered regions span residues serine 188–alanine 300 and alanine 321–valine 471. The span at histidine 238 to threonine 247 shows a compositional bias: basic residues. A compositionally biased stretch (low complexity) spans lysine 256–leucine 269. Basic and acidic residues predominate over residues lysine 270 to arginine 287.

It belongs to the PNMA family.

The chain is Paraneoplastic antigen-like protein 8A (PNMA8A) from Bos taurus (Bovine).